The sequence spans 109 residues: UPF0060 membrane protein HEAR0108 (109 aa).

4 helical membrane-spanning segments follow: residues 7-27 (VALF…PYLW), 33-53 (SIWL…LLSL), 63-83 (AAYG…VDGI), and 87-107 (NWDV…MFAP).

The protein belongs to the UPF0060 family.

The protein localises to the cell inner membrane. In Herminiimonas arsenicoxydans, this protein is UPF0060 membrane protein HEAR0108.